Reading from the N-terminus, the 158-residue chain is MQGRLSAWLVKHGLIHRSLGFDYQGIETLQIKPEDWHSIAVILYIYGYNYLRSQCAYDVAPGGLLASVYHLTRIEYGVDQPEEVCIKVFSPRKNPRIPSVFWVWKGVDFQERESFDMLGISYDNHPRLKRILMPESWIGWPLRKDYIAPNFYEIQDAH.

It belongs to the complex I 30 kDa subunit family. NDH is composed of at least 16 different subunits, 5 of which are encoded in the nucleus.

The protein resides in the plastid. The protein localises to the chloroplast thylakoid membrane. The catalysed reaction is a plastoquinone + NADH + (n+1) H(+)(in) = a plastoquinol + NAD(+) + n H(+)(out). It carries out the reaction a plastoquinone + NADPH + (n+1) H(+)(in) = a plastoquinol + NADP(+) + n H(+)(out). In terms of biological role, NDH shuttles electrons from NAD(P)H:plastoquinone, via FMN and iron-sulfur (Fe-S) centers, to quinones in the photosynthetic chain and possibly in a chloroplast respiratory chain. The immediate electron acceptor for the enzyme in this species is believed to be plastoquinone. Couples the redox reaction to proton translocation, and thus conserves the redox energy in a proton gradient. This chain is NAD(P)H-quinone oxidoreductase subunit J, chloroplastic, found in Daucus carota (Wild carrot).